The sequence spans 225 residues: Sodium-dependent neutral amino acid transporter SLC6A17 (225 aa).

The next 3 helical transmembrane spans lie at 1–8 (NVWRFPYL), 16–35 (AYLVPYLVLLIIIGIPLFFL), and 60–80 (GIGFSSCIVCLFVGLYYNVII). Over 81 to 143 (GWSIFYFFKS…NSISESGGLN (63 aa)) the chain is Extracellular. N-linked (GlcNAc...) asparagine glycosylation occurs at N105. The next 3 membrane-spanning stretches (helical) occupy residues 144–162 (WKMTLCLLVAWRIVGMAVV), 171–188 (VMYFSSLFPYVVLACFLV), and 224–225 (IF).

Belongs to the sodium:neurotransmitter symporter (SNF) (TC 2.A.22) family.

The protein resides in the cytoplasmic vesicle. It localises to the secretory vesicle. Its subcellular location is the synaptic vesicle membrane. The protein localises to the postsynapse. It is found in the presynapse. The enzyme catalyses L-proline(in) + Na(+)(in) = L-proline(out) + Na(+)(out). The catalysed reaction is L-leucine(in) + Na(+)(in) = L-leucine(out) + Na(+)(out). It catalyses the reaction glycine(in) + Na(+)(in) = glycine(out) + Na(+)(out). It carries out the reaction L-alanine(in) + Na(+)(in) = L-alanine(out) + Na(+)(out). The enzyme catalyses L-glutamine(in) + Na(+)(in) = L-glutamine(out) + Na(+)(out). Synaptic vesicle transporter with apparent selectivity for neutral amino acids. The transport is sodium-coupled but chloride-independent, likely driven by the proton electrochemical gradient generated by vacuolar H(+)-ATPase in an overall electrogenic mechanism. May contribute to the synaptic uptake of neurotransmitter precursors in a process coupled in part to vesicle exocytosis. In Bos taurus (Bovine), this protein is Sodium-dependent neutral amino acid transporter SLC6A17.